A 273-amino-acid polypeptide reads, in one-letter code: Glutamate 5-kinase (273 aa).

Lysine 15 contributes to the ATP binding site. Residues serine 55, aspartate 142, and asparagine 158 each contribute to the substrate site. ATP is bound by residues 178–179 (SD) and 220–226 (TGGMLSK).

This sequence belongs to the glutamate 5-kinase family.

The protein resides in the cytoplasm. The enzyme catalyses L-glutamate + ATP = L-glutamyl 5-phosphate + ADP. The protein operates within amino-acid biosynthesis; L-proline biosynthesis; L-glutamate 5-semialdehyde from L-glutamate: step 1/2. Catalyzes the transfer of a phosphate group to glutamate to form L-glutamate 5-phosphate. The sequence is that of Glutamate 5-kinase from Streptococcus pyogenes serotype M18 (strain MGAS8232).